The sequence spans 498 residues: MSILLYFIALLSLIIIKKIKDSNRNLPPSPLKLPVIGNLYQLRGLFHKCLHDLSKKHGPVLLLRLGFLDMVVISSTEAAEEALKVHDLECCTRPITNVTSKLWRDGQDIGLAPYGESLRELRKLSFLKFFSTTKVRSFRYIREEENDLMVKKLKEAALKKSSVDLSQTLFGLVGSIIFRSAFGQRFDEGNHVNAEKIEDLMFEVQKLGALSNSDLFPGGLGWFVDFVSGHNKKLHKVFVEVDTLLNHIIDDHLKNSIEEITHDRPDIIDSLLDMIRKQEQGDSFKLTIDNLKGIIQDIYLAGVDTSAITMIWAMAELVKNPRVMKKVQDEIRTCIGIKQNEKIEEDDVDKLQYLKLVVKETLRLHPAAPLLLPRETMSQIKIQGYNIPSKTILLVNVWSIGRDPKHWKNPEEFNPERFIDCPIDYKGNSFEMLPFGSGRRICPGIAFAIATVELGLLNLLYHFDWRLPEEDKDLDMEEAGDVTIIKKVPLKLVPVLHH.

Residues 1 to 21 (MSILLYFIALLSLIIIKKIKD) form a helical membrane-spanning segment. Cys442 provides a ligand contact to heme.

This sequence belongs to the cytochrome P450 family. It depends on heme as a cofactor.

It is found in the membrane. The protein is Cytochrome P450 71B24 (CYP71B24) of Arabidopsis thaliana (Mouse-ear cress).